A 155-amino-acid polypeptide reads, in one-letter code: Protein-export protein SecB (155 aa).

Belongs to the SecB family. As to quaternary structure, homotetramer, a dimer of dimers. One homotetramer interacts with 1 SecA dimer.

It is found in the cytoplasm. Functionally, one of the proteins required for the normal export of preproteins out of the cell cytoplasm. It is a molecular chaperone that binds to a subset of precursor proteins, maintaining them in a translocation-competent state. It also specifically binds to its receptor SecA. This chain is Protein-export protein SecB, found in Klebsiella pneumoniae subsp. pneumoniae (strain ATCC 700721 / MGH 78578).